Here is a 120-residue protein sequence, read N- to C-terminus: Large ribosomal subunit protein uL18 (120 aa).

This sequence belongs to the universal ribosomal protein uL18 family. Part of the 50S ribosomal subunit; part of the 5S rRNA/L5/L18/L25 subcomplex. Contacts the 5S and 23S rRNAs.

This is one of the proteins that bind and probably mediate the attachment of the 5S RNA into the large ribosomal subunit, where it forms part of the central protuberance. This is Large ribosomal subunit protein uL18 from Lawsonia intracellularis (strain PHE/MN1-00).